The sequence spans 77 residues: DNA-directed RNA polymerase subunit epsilon (77 aa).

The protein belongs to the RNA polymerase subunit epsilon family. As to quaternary structure, RNAP is composed of a core of 2 alpha, a beta and a beta' subunit. The core is associated with a delta subunit, and at least one of epsilon or omega. When a sigma factor is associated with the core the holoenzyme is formed, which can initiate transcription.

It catalyses the reaction RNA(n) + a ribonucleoside 5'-triphosphate = RNA(n+1) + diphosphate. Its function is as follows. A non-essential component of RNA polymerase (RNAP). The polypeptide is DNA-directed RNA polymerase subunit epsilon (Streptococcus pneumoniae (strain P1031)).